A 122-amino-acid polypeptide reads, in one-letter code: Large ribosomal subunit protein uL14 (122 aa).

Belongs to the universal ribosomal protein uL14 family. As to quaternary structure, part of the 50S ribosomal subunit. Forms a cluster with proteins L3 and L19. In the 70S ribosome, L14 and L19 interact and together make contacts with the 16S rRNA in bridges B5 and B8.

Functionally, binds to 23S rRNA. Forms part of two intersubunit bridges in the 70S ribosome. This chain is Large ribosomal subunit protein uL14, found in Chlamydia trachomatis serovar L2 (strain ATCC VR-902B / DSM 19102 / 434/Bu).